The following is a 174-amino-acid chain: Vimentin-type intermediate filament-associated coiled-coil protein (174 aa).

A coiled-coil region spans residues leucine 7–leucine 97. The disordered stretch occupies residues glycine 128–valine 174.

The protein localises to the cytoplasm. This chain is Vimentin-type intermediate filament-associated coiled-coil protein (Vmac), found in Mus musculus (Mouse).